The sequence spans 355 residues: Probable dual-specificity RNA methyltransferase RlmN 1 (355 aa).

Glu91 functions as the Proton acceptor in the catalytic mechanism. Residues 99–336 (RADRAAGCLS…THLRRSRGPD (238 aa)) form the Radical SAM core domain. The cysteines at positions 106 and 341 are disulfide-linked. Cys113, Cys117, and Cys120 together coordinate [4Fe-4S] cluster. Residues 163-164 (GE), Ser195, 218-220 (SLH), and Asn294 contribute to the S-adenosyl-L-methionine site. The S-methylcysteine intermediate role is filled by Cys341.

The protein belongs to the radical SAM superfamily. RlmN family. [4Fe-4S] cluster is required as a cofactor.

It localises to the cytoplasm. It catalyses the reaction adenosine(2503) in 23S rRNA + 2 reduced [2Fe-2S]-[ferredoxin] + 2 S-adenosyl-L-methionine = 2-methyladenosine(2503) in 23S rRNA + 5'-deoxyadenosine + L-methionine + 2 oxidized [2Fe-2S]-[ferredoxin] + S-adenosyl-L-homocysteine. The enzyme catalyses adenosine(37) in tRNA + 2 reduced [2Fe-2S]-[ferredoxin] + 2 S-adenosyl-L-methionine = 2-methyladenosine(37) in tRNA + 5'-deoxyadenosine + L-methionine + 2 oxidized [2Fe-2S]-[ferredoxin] + S-adenosyl-L-homocysteine. Its function is as follows. Specifically methylates position 2 of adenine 2503 in 23S rRNA and position 2 of adenine 37 in tRNAs. The polypeptide is Probable dual-specificity RNA methyltransferase RlmN 1 (Opitutus terrae (strain DSM 11246 / JCM 15787 / PB90-1)).